The chain runs to 185 residues: UPF0301 protein IL2218 (185 aa).

It belongs to the UPF0301 (AlgH) family.

This is UPF0301 protein IL2218 from Idiomarina loihiensis (strain ATCC BAA-735 / DSM 15497 / L2-TR).